A 196-amino-acid polypeptide reads, in one-letter code: Peroxiredoxin TSA2 (196 aa).

The Thioredoxin domain occupies Ala3–Trp161. Residue Lys14 forms a Glycyl lysine isopeptide (Lys-Gly) (interchain with G-Cter in ubiquitin) linkage. Residue Cys48 is the Cysteine sulfenic acid (-SOH) intermediate of the active site. Glycyl lysine isopeptide (Lys-Gly) (interchain with G-Cter in ubiquitin) cross-links involve residues Lys89 and Lys132. Thr174 is subject to Phosphothreonine.

The protein belongs to the peroxiredoxin family. AhpC/Prx1 subfamily. In terms of assembly, homodimer; disulfide-linked, upon oxidation.

The protein resides in the cytoplasm. The catalysed reaction is a hydroperoxide + [thioredoxin]-dithiol = an alcohol + [thioredoxin]-disulfide + H2O. In terms of biological role, thiol-specific peroxidase that catalyzes the reduction of hydrogen peroxide and organic hydroperoxides to water and alcohols, respectively. Plays a role in cell protection against oxidative stress by detoxifying peroxides and as sensor of hydrogen peroxide-mediated signaling events. Can act alternatively as peroxidase and molecular chaperone. Oxidative stress and heat shock exposure cause a reversible shift of the protein structure from low MW species to high MW complexes, triggering a peroxidase-to-chaperone functional switch. The chaperone function of the protein enhances resistance to heat shock. The polypeptide is Peroxiredoxin TSA2 (Saccharomyces cerevisiae (strain ATCC 204508 / S288c) (Baker's yeast)).